We begin with the raw amino-acid sequence, 1479 residues long: MVPIRPALAPWPRHLLRCVLLLGGLRLGHPADSAAALLEPDVFLIFSQGMQGCLEAQGVQVRVTPVCNASLPAQRWKWVSRNRLFNLGATQCLGTGWPVTNTTVSLGMYECDREALSLRWQCRTLGDQLSLLLGARASNASKPGTLERGDQTRSGHWNIYGSEEDLCARPYYEVYTIQGNSHGKPCTIPFKYDNQWFHGCTSTGREDGHLWCATTQDYGKDERWGFCPIKSNDCETFWDKDQLTDSCYQFNFQSTLSWREAWASCEQQGADLLSITEIHEQTYINGLLTGYSSTLWIGLNDLDTSGGWQWSDNSPLKYLNWESDQPDNPGEENCGVIRTESSGGWQNHDCSIALPYVCKKKPNATVEPIQPDRWTNVKVECDPSWQPFQGHCYRLQAEKRSWQESKRACLRGGGDLLSIHSMAELEFITKQIKQEVEELWIGLNDLKLQMNFEWSDGSLVSFTHWHPFEPNNFRDSLEDCVTIWGPEGRWNDSPCNQSLPSICKKAGRLSQGAAEEDHGCRKGWTWHSPSCYWLGEDQVIYSDARRLCTDHGSQLVTITNRFEQAFVSSLIYNWEGEYFWTALQDLNSTGSFRWLSGDEVIYTHWNRDQPGYRRGGCVALATGSAMGLWEVKNCTSFRARYICRQSLGTPVTPELPGPDPTPSLTGSCPQGWVSDPKLRHCYKVFSSERLQEKKSWIQALGVCRELGAQLLSLASYEEEHFVAHMLNKIFGESEPESHEQHWFWIGLNRRDPREGHSWRWSDGLGFSYHNFARSRHDDDDIRGCAVLDLASLQWVPMQCQTQLDWICKIPRGVDVREPDIGRQGRLEWVRFQEAEYKFFEHHSSWAQAQRICTWFQADLTSVHSQAELDFLGQNLQKLSSDQEQHWWIGLHTLESDGRFRWTDGSIINFISWAPGKPRPIGKDKKCVYMTARQEDWGDQRCHTALPYICKRSNSSGETQPQDLPPSALGGCPSGWNQFLNKCFRIQGQDPQDRVKWSEAQFSCEQQEAQLVTIANPLEQAFITASLPNVTFDLWIGLHASQRDFQWIEQEPLLYTNWAPGEPSGPSPAPSGTKPTSCAVILHSPSAHFTGRWDDRSCTEETHGFICQKGTDPSLSPSPAATPPAPGAELSYLNHTFRLLQKPLRWKDALLLCESRNASLAHVPDPYTQAFLTQAARGLQTPLWIGLASEEGSRRYSWLSEEPLNYVSWQDEEPQHSGGCAYVDVDGTWRTTSCDTKLQGAVCGVSRGPPPRRINYRGSCPQGLADSSWIPFREHCYSFHMEVLLGHKEALQRCQKAGGTVLSILDEMENVFVWEHLQTAEAQSRGAWLGMNFNPKGGTLVWQDNTAVNYSNWGPPGLGPSMLSHNSCYWIQSSSGLWRPGACTNITMGVVCKLPRVEENSFLPSAALPESPVALVVVLTAVLLLLALMTAALILYRRRQSAERGSFEGARYSRSSHSGPAEATEKNILVSDMEMNEQQE.

An N-terminal signal peptide occupies residues 1 to 30 (MVPIRPALAPWPRHLLRCVLLLGGLRLGHP). Over 31 to 1413 (ADSAAALLEP…SAALPESPVA (1383 aa)) the chain is Extracellular. The 154-residue stretch at 37 to 190 (LLEPDVFLIF…SHGKPCTIPF (154 aa)) folds into the Ricin B-type lectin domain. Cys-92 and Cys-111 are oxidised to a cystine. Asn-101 and Asn-139 each carry an N-linked (GlcNAc...) asparagine glycan. The Fibronectin type-II domain maps to 181–229 (SHGKPCTIPFKYDNQWFHGCTSTGREDGHLWCATTQDYGKDERWGFCPI). Intrachain disulfides connect Cys-186/Cys-212, Cys-200/Cys-227, Cys-265/Cys-358, and Cys-334/Cys-350. The C-type lectin 1 domain maps to 243–359 (LTDSCYQFNF…CSIALPYVCK (117 aa)). A glycan (N-linked (GlcNAc...) asparagine) is linked at Asn-363. C-type lectin domains follow at residues 388–504 (FQGH…SICK), 527–643 (HSPS…RYIC), 677–808 (KLRH…WICK), 831–950 (FQEA…YICK), 978–1106 (FLNK…GFIC), 1131–1242 (YLNH…GAVC), and 1271–1391 (FREH…GVVC). Intrachain disulfides connect Cys-409–Cys-503, Cys-480–Cys-495, Cys-617–Cys-634, Cys-703–Cys-807, Cys-784–Cys-799, Cys-852–Cys-949, and Cys-926–Cys-941. An N-linked (GlcNAc...) asparagine glycan is attached at Asn-1028. Cys-1077 and Cys-1097 are disulfide-bonded. A Glycyl lysine isopeptide (Lys-Gly) (interchain with G-Cter in SUMO1) cross-link involves residue Lys-1141. Residues Cys-1219 and Cys-1233 are joined by a disulfide bond. Asn-1348 carries an N-linked (GlcNAc...) asparagine glycan. Cys-1367 and Cys-1382 are joined by a disulfide. A helical transmembrane segment spans residues 1414 to 1434 (LVVVLTAVLLLLALMTAALIL). The Cytoplasmic segment spans residues 1435–1479 (YRRRQSAERGSFEGARYSRSSHSGPAEATEKNILVSDMEMNEQQE). The segment at 1446–1479 (FEGARYSRSSHSGPAEATEKNILVSDMEMNEQQE) is disordered.

Interacts directly with PLAUR/UPAR and PLAU/pro-UPA to form a tri-molecular complex. Interacts with collagen V and with C-terminal region of type I collagen/COL1A1. In terms of processing, phosphorylated. Highly expressed in heart, lung and kidney, but little or no expression in brain, thymus or adult liver. Expressed at highly endothelialized sites such as those in choroid plexus and kidney glomerulai as well as in chondrocytes in cartilaginous regions of the embryo.

Its subcellular location is the membrane. May play a role as endocytotic lectin receptor displaying calcium-dependent lectin activity. Internalizes glycosylated ligands from the extracellular space for release in an endosomal compartment via clathrin-mediated endocytosis. May be involved in plasminogen activation system controlling the extracellular level of PLAUR/PLAU, and thus may regulate protease activity at the cell surface. May contribute to cellular uptake, remodeling and degradation of extracellular collagen matrices. May participate in remodeling of extracellular matrix cooperating with the matrix metalloproteinases (MMPs). This chain is C-type mannose receptor 2 (Mrc2), found in Mus musculus (Mouse).